The following is a 701-amino-acid chain: Polyribonucleotide nucleotidyltransferase (701 aa).

Mg(2+) is bound by residues Asp487 and Asp493. In terms of domain architecture, KH spans 554–613 (PTMIAMKIDTDKIRDVIGKGGATIRAICEETKASIDIEDDGSIKIFGETKEAADAAKQRI). One can recognise an S1 motif domain in the interval 623–691 (GKIYVGKVER…NRGRIKLSIK (69 aa)).

Belongs to the polyribonucleotide nucleotidyltransferase family. As to quaternary structure, component of the RNA degradosome, which is a multiprotein complex involved in RNA processing and mRNA degradation. Mg(2+) is required as a cofactor.

The protein resides in the cytoplasm. It carries out the reaction RNA(n+1) + phosphate = RNA(n) + a ribonucleoside 5'-diphosphate. Its function is as follows. Involved in mRNA degradation. Catalyzes the phosphorolysis of single-stranded polyribonucleotides processively in the 3'- to 5'-direction. The sequence is that of Polyribonucleotide nucleotidyltransferase from Pseudomonas putida (strain ATCC 47054 / DSM 6125 / CFBP 8728 / NCIMB 11950 / KT2440).